A 606-amino-acid chain; its full sequence is Transcription factor glial cells missing 2 (606 aa).

A compositionally biased stretch (polar residues) spans 20–37 (DHSQLTQFVQPQSQSTHS). Disordered stretches follow at residues 20–65 (DHSQ…KGKR), 475–501 (EMQQ…HHYY), and 561–606 (TAPT…SVTH). Residues 44–61 (PGQQQAGGSMTMPSSSTG) show a composition bias toward low complexity. Residues 65–224 (REWDINDAIV…KNSSVSKRAF (160 aa)) constitute a DNA-binding region (GCM). The segment covering 490–501 (FGGNQTAGHHYY) has biased composition (polar residues). A compositionally biased stretch (pro residues) spans 569–580 (PGHPPPPPPPPT). A compositionally biased stretch (basic residues) spans 583–593 (YHHHHHHHLHH). Over residues 594–606 (PAAATGLAPSVTH) the composition is skewed to low complexity.

Expressed in glial lineages within embryonic procephalic mesoderm. Expression is highest in hemocyte primordia and longitudinal and nerve root ganglia.

The protein resides in the nucleus. Transcription factor with a minor role promoting glial cell differentiation and a more significant role in hematocyte differentiation. Gcm2, together with gcm, is required for the proliferation of plasmatocyte precursors, the expression of Croquemort protein, and the ability of plasmatocytes to convert into macrophages. This Drosophila melanogaster (Fruit fly) protein is Transcription factor glial cells missing 2 (gcm2).